The primary structure comprises 240 residues: Large ribosomal subunit protein uL3 (240 aa).

Disordered stretches follow at residues 138-158 and 215-240; these read SISH…KTFK and EAPL…SAEG. N5-methylglutamine is present on Gln-151.

The protein belongs to the universal ribosomal protein uL3 family. In terms of assembly, part of the 50S ribosomal subunit. Forms a cluster with proteins L14 and L19. In terms of processing, methylated by PrmB.

In terms of biological role, one of the primary rRNA binding proteins, it binds directly near the 3'-end of the 23S rRNA, where it nucleates assembly of the 50S subunit. This chain is Large ribosomal subunit protein uL3, found in Beijerinckia indica subsp. indica (strain ATCC 9039 / DSM 1715 / NCIMB 8712).